Reading from the N-terminus, the 151-residue chain is MAQLMNKAKNFVAEKVANVEKPKASVEDVDLKDVGRHGITYLTRICVENPYSASIPVGEIKYTLKSAGRVIVSGNIPDPGSLKGNDKTMLEPAIKVPHSALVSLIKDIGADMDIDYVLELGLVVDLPVIGNFTIPLSHKGEMKLPGLSDIF.

It belongs to the LEA type 2 family.

The protein is Desiccation-related protein PCC27-45 of Craterostigma plantagineum (Blue gem).